The primary structure comprises 111 residues: Large ribosomal subunit protein uL23 (111 aa).

It belongs to the universal ribosomal protein uL23 family. Part of the 50S ribosomal subunit. Contacts protein L29, and trigger factor when it is bound to the ribosome.

Functionally, one of the early assembly proteins it binds 23S rRNA. One of the proteins that surrounds the polypeptide exit tunnel on the outside of the ribosome. Forms the main docking site for trigger factor binding to the ribosome. The protein is Large ribosomal subunit protein uL23 of Chlamydia muridarum (strain MoPn / Nigg).